Consider the following 83-residue polypeptide: Exodeoxyribonuclease 7 small subunit (83 aa).

It belongs to the XseB family. In terms of assembly, heterooligomer composed of large and small subunits.

It is found in the cytoplasm. It carries out the reaction Exonucleolytic cleavage in either 5'- to 3'- or 3'- to 5'-direction to yield nucleoside 5'-phosphates.. Bidirectionally degrades single-stranded DNA into large acid-insoluble oligonucleotides, which are then degraded further into small acid-soluble oligonucleotides. The sequence is that of Exodeoxyribonuclease 7 small subunit from Bradyrhizobium sp. (strain BTAi1 / ATCC BAA-1182).